Here is an 87-residue protein sequence, read N- to C-terminus: Beta-toxin Cn5 (87 aa).

An N-terminal signal peptide occupies residues 1-19; the sequence is MNSLLMITACLFLIGTVWA. Positions 20–85 constitute an LCN-type CS-alpha/beta domain; it reads KEGYLVNKST…TYPLPNKSCS (66 aa). Cystine bridges form between cysteine 31–cysteine 84, cysteine 35–cysteine 60, cysteine 44–cysteine 65, and cysteine 48–cysteine 67.

The protein belongs to the long (4 C-C) scorpion toxin superfamily. Sodium channel inhibitor family. Beta subfamily. As to expression, expressed by the venom gland.

It localises to the secreted. Its function is as follows. Beta toxins bind voltage-independently at site-4 of sodium channels (Nav) and shift the voltage of activation toward more negative potentials thereby affecting sodium channel activation and promoting spontaneous and repetitive firing. This toxin is lethal to crustaceans (freshwater crayfish (Cambarellus montezumae spp.)), it provokes a reversible paralysis to insects (crickets (Achaeta spp.)), but is not toxic to mice. At high concentrations, it does displace the (beta) mammal-specific toxin Cn2 from rat brain synaptosomes. This is Beta-toxin Cn5 from Centruroides noxius (Mexican scorpion).